The primary structure comprises 333 residues: MQTSAEMGGIIEAMPALAQDGYALEQAPPEHCPGPASENAGKGDACQGCANKDICESLPKGPDPDVALITQNLAPVRHKVLVLSGKGGVGKSTFSAMLGWALSADEALQVGVMDLDICGPSLPHMLGCVNETVHESSVGWTPVYVADNLAAMSIQFMLPEDDSAVIWRGAKKNALIKRFLKDVYWDELDYLVVDTPPGTSDEHITINTLLKESGIDGALVVTTPQEVALLDVRKELDFCRKAGIRVLGLVENMSGFVCPSCENESTIFKPTTGGGRALCEELGIKFLGAVPIDPRIGRCCDSGESFLDAYPDSPASTAIMHVVEALRDAVGDV.

[4Fe-4S] cluster is bound by residues Cys-32, Cys-46, Cys-49, and Cys-55. 85–92 (GKGGVGKS) serves as a coordination point for ATP. [4Fe-4S] cluster is bound by residues Cys-258 and Cys-261.

This sequence belongs to the Mrp/NBP35 ATP-binding proteins family. NUBP1/NBP35 subfamily. Heterotetramer of 2 NBP35 and 2 CFD1 chains. Requires [4Fe-4S] cluster as cofactor.

It is found in the cytoplasm. It localises to the nucleus. In terms of biological role, component of the cytosolic iron-sulfur (Fe/S) protein assembly (CIA) machinery. Required for maturation of extramitochondrial Fe-S proteins. The NBP35-CFD1 heterotetramer forms a Fe-S scaffold complex, mediating the de novo assembly of an Fe-S cluster and its transfer to target apoproteins. Required for biogenesis and export of both ribosomal subunits, which may reflect a role in assembly of the Fe/S clusters in RLI1, a protein which performs rRNA processing and ribosome export. This Eremothecium gossypii (strain ATCC 10895 / CBS 109.51 / FGSC 9923 / NRRL Y-1056) (Yeast) protein is Cytosolic Fe-S cluster assembly factor NBP35.